The primary structure comprises 527 residues: Cytochrome b5 reductase 4 (527 aa).

The segment at 1–24 (MLNVPSQAFPAAGSQQRVAPAGQS) is disordered. In terms of domain architecture, Cytochrome b5 heme-binding spans 56 to 132 (LIEVTEDELK…LKECLVGRMA (77 aa)). The heme site is built by His91 and His114. The disordered stretch occupies residues 138–171 (ALQAHTEKTESTHLNGLSAPPSLRPEPLSAPLPA). In terms of domain architecture, CS spans 173 to 264 (DHRPRYDWFQ…SVKEKWTQLG (92 aa)). The 112-residue stretch at 281–392 (LFYRECVLLS…GGPEGSFTLR (112 aa)) folds into the FAD-binding FR-type domain. Residues 372–387 (ANLP…GPEG) and 399–431 (HLYM…KMKL) each bind FAD.

The protein belongs to the flavoprotein pyridine nucleotide cytochrome reductase family. Requires FAD as cofactor.

The protein localises to the endoplasmic reticulum. It catalyses the reaction 2 Fe(III)-[cytochrome b5] + NADH = 2 Fe(II)-[cytochrome b5] + NAD(+) + H(+). NADH-cytochrome b5 reductase involved in endoplasmic reticulum stress response pathway. This Danio rerio (Zebrafish) protein is Cytochrome b5 reductase 4 (cyb5r4).